Reading from the N-terminus, the 434-residue chain is KH domain-containing protein 3 (434 aa).

The segment at 1–39 (MATLKTFRTLVQLKHKLGKAYEIVGEPRLPKWFHVEYLE) is involved in RNA binding. The region spanning 40 to 118 (DPKKMYVEPT…CRMKLMEKEA (79 aa)) is the KH; atypical domain. Threonine 267 and threonine 279 each carry phosphothreonine. The required for interaction with NUMA1 and regulation of apoptosis in response to DNA damage stretch occupies residues 334–434 (VREAATQQTP…RAVWEPFVML (101 aa)).

It belongs to the KHDC1 family. As to quaternary structure, component of the subcortical maternal complex (SCMC), at least composed of NLRP5, KHDC3, OOEP, and TLE6. Within the complex, interacts with NLRP5, KHDC3 and TLE6. The SCMC may facilitate translocation of its components between the nuclear and cytoplasmic compartments. Forms a scaffold complex with OOEP/FLOPED, and interacts with BLM and TRIM25 at DNA replication forks. Interacts with PARP1; the interaction is increased following the formation of DNA double-strand breaks. Interacts (via C-terminus) with NUMA1.

The protein resides in the cytoplasm. It is found in the cell cortex. It localises to the nucleus. The protein localises to the mitochondrion. Its subcellular location is the cytoskeleton. The protein resides in the microtubule organizing center. It is found in the centrosome. It localises to the chromosome. In terms of biological role, component of the subcortical maternal complex (SCMC), a multiprotein complex that plays a key role in early embryonic development. The SCMC complex is a structural constituent of cytoplasmic lattices, which consist in fibrous structures found in the cytoplasm of oocytes and preimplantation embryos. They are required to store maternal proteins critical for embryonic development, such as proteins that control epigenetic reprogramming of the preimplantation embryo, and prevent their degradation or activation. KHDC3 ensures proper spindle assembly by regulating the localization of AURKA via RHOA signaling and of PLK1 via a RHOA-independent process. Required for the localization of MAD2L1 to kinetochores to enable spindle assembly checkpoint function. As part of the OOEP-KHDC3 scaffold, recruits BLM and TRIM25 to DNA replication forks, thereby promoting the ubiquitination of BLM by TRIM25, enhancing BLM retainment at replication forks and therefore promoting stalled replication fork restart. Regulates homologous recombination-mediated DNA repair via recruitment of RAD51 to sites of DNA double-strand breaks, and sustainment of PARP1 activity, which in turn modulates downstream ATM or ATR activation. Activation of ATM or ATR in response to DNA double-strand breaks may be cell-type specific. Its role in DNA double-strand break repair is independent of its role in restarting stalled replication forks. Promotes neural stem cell neurogenesis and neuronal differentiation in the hippocampus. May regulate normal development of learning, memory and anxiety. Capable of binding RNA. This chain is KH domain-containing protein 3, found in Rattus norvegicus (Rat).